The chain runs to 719 residues: DNA replication licensing factor MCM7 (719 aa).

Position 2 is an N-acetylalanine (Ala2). Glycyl lysine isopeptide (Lys-Gly) (interchain with G-Cter in SUMO2) cross-links involve residues Lys15 and Lys28. 2 positions are modified to phosphoserine: Ser121 and Ser314. Positions 332 to 538 constitute an MCM domain; sequence FYEKLAASIA…NDLRLAQHIT (207 aa). Tyr345 is a binding site for ATP. Residue Ser365 is modified to Phosphoserine. The ATP site is built by Gly384, Ala386, Lys387, Ser388, and Asn489. Phosphoserine is present on Ser500. Positions 513-516 match the Arginine finger motif; that stretch reads SRFD. ATP is bound at residue Arg514. Residues 521 to 564 form an interaction with RAD17 region; the sequence is IQDRPDRDNDLRLAQHITYVHQHSRQPPAQFEPLDMKLMRRYIA. Residues 577-719 form an interaction with ATRIP region; the sequence is LADYITAAYV…NTARTRITFV (143 aa). Residue Arg604 coordinates ATP. A Phosphoserine modification is found at Ser678.

This sequence belongs to the MCM family. Component of the MCM2-7 complex. The complex forms a toroidal hexameric ring with the proposed subunit order MCM2-MCM6-MCM4-MCM7-MCM3-MCM5. Component of the CMG helicase complex, a hexameric ring of related MCM2-7 subunits stabilized by CDC45 and the tetrameric GINS complex. Interacts with the ATR-ATRIP complex and with RAD17. Interacts with TIPIN. Interacts with MCMBP. Interacts with ANKRD17. Component of the replisome complex composed of at least DONSON, MCM2, MCM7, PCNA and TICRR. O-glycosylated (O-GlcNAcylated), in a cell cycle-dependent manner. Post-translationally, ubiquitinated by ECS(LRR1) E3 ubiquitin-protein ligase complex when forks converge following formation of DNA interstrand cross-links. During mitosis, ubiquitinated by TRAIP when forks converge following formation of DNA interstrand cross-links. Short ubiquitin chains on MCM7 promote recruitment of DNA glycosylase NEIL3. If the interstrand cross-link cannot be cleaved by NEIL3, the ubiquitin chains continue to grow on MCM7, promoting the unloading of the CMG helicase complex by the VCP/p97 ATPase.

The protein localises to the nucleus. The protein resides in the chromosome. It carries out the reaction ATP + H2O = ADP + phosphate + H(+). Its function is as follows. Acts as a component of the MCM2-7 complex (MCM complex) which is the replicative helicase essential for 'once per cell cycle' DNA replication initiation and elongation in eukaryotic cells. Core component of CDC45-MCM-GINS (CMG) helicase, the molecular machine that unwinds template DNA during replication, and around which the replisome is built. The active ATPase sites in the MCM2-7 ring are formed through the interaction surfaces of two neighboring subunits such that a critical structure of a conserved arginine finger motif is provided in trans relative to the ATP-binding site of the Walker A box of the adjacent subunit. The six ATPase active sites, however, are likely to contribute differentially to the complex helicase activity. Required for S-phase checkpoint activation upon UV-induced damage. This Bos taurus (Bovine) protein is DNA replication licensing factor MCM7 (MCM7).